Consider the following 146-residue polypeptide: Hemoglobin subunit delta (146 aa).

The 145-residue stretch at 2 to 146 folds into the Globin domain; sequence HLTGDEKSAV…VATALAHKYH (145 aa). S50 carries the phosphoserine modification. Positions 63 and 92 each coordinate heme b.

The protein belongs to the globin family. In terms of assembly, heterotetramer of two delta chains and two alpha chains. In terms of tissue distribution, red blood cells.

The chain is Hemoglobin subunit delta (HBD) from Aotus trivirgatus (Three-striped night monkey).